Reading from the N-terminus, the 248-residue chain is NADP-dependent 3-hydroxy acid dehydrogenase YdfG (248 aa).

Residues 7-12, 32-33, 54-55, and N81 contribute to the NADP(+) site; these read GATAGF, RR, and DV. S134 contacts substrate. Residues Y147, K151, and 177 to 185 each bind NADP(+); that span reads PGLVGGTEF. Catalysis depends on Y147, which acts as the Proton acceptor.

It belongs to the short-chain dehydrogenases/reductases (SDR) family. As to quaternary structure, homotetramer.

It carries out the reaction 3-hydroxypropanoate + NADP(+) = 3-oxopropanoate + NADPH + H(+). The enzyme catalyses L-allo-threonine + NADP(+) = aminoacetone + CO2 + NADPH. Functionally, NADP-dependent dehydrogenase with broad substrate specificity acting on 3-hydroxy acids. Catalyzes the NADP-dependent oxidation of L-allo-threonine to L-2-amino-3-keto-butyrate, which is spontaneously decarboxylated into aminoacetone. Also acts on D-threonine, L-serine, D-serine, D-3-hydroxyisobutyrate, L-3-hydroxyisobutyrate, D-glycerate and L-glycerate. Able to catalyze the reduction of the malonic semialdehyde to 3-hydroxypropionic acid. YdfG is apparently supplementing RutE, the presumed malonic semialdehyde reductase involved in pyrimidine degradation since both are able to detoxify malonic semialdehyde. This is NADP-dependent 3-hydroxy acid dehydrogenase YdfG from Escherichia coli O6:H1 (strain CFT073 / ATCC 700928 / UPEC).